The chain runs to 373 residues: D-alanine--D-alanine ligase (373 aa).

One can recognise an ATP-grasp domain in the interval 156 to 363 (KKLWSAAGLP…YPTLLATMVE (208 aa)). 184–239 (LQRLGLPAYVKPARGGSSIGVSRVSSFDELPAAIAAARRHDPKVIVEAAINGRELE) lines the ATP pocket. Residues D318, E330, and N332 each coordinate Mg(2+).

It belongs to the D-alanine--D-alanine ligase family. Mg(2+) is required as a cofactor. The cofactor is Mn(2+).

The protein localises to the cytoplasm. The enzyme catalyses 2 D-alanine + ATP = D-alanyl-D-alanine + ADP + phosphate + H(+). The protein operates within cell wall biogenesis; peptidoglycan biosynthesis. Cell wall formation. In Mycobacterium ulcerans (strain Agy99), this protein is D-alanine--D-alanine ligase.